The chain runs to 429 residues: Malate dehydrogenase [NADP] 1, chloroplastic (429 aa).

Residues 1 to 40 (MGLSTAYSPVGSHLAPAPLGHRRSAQLHRPRRALLATVRC) constitute a chloroplast transit peptide. A disulfide bridge connects residues cysteine 64 and cysteine 69. 93–99 (GAAGMIS) contacts NADP(+). 2 residues coordinate substrate: arginine 174 and arginine 180. Residues asparagine 187, glutamine 194, and 211–213 (VGN) contribute to the NADP(+) site. Substrate contacts are provided by asparagine 213 and arginine 244. Catalysis depends on histidine 269, which acts as the Proton acceptor. Residues cysteine 405 and cysteine 417 are joined by a disulfide bond.

The protein belongs to the LDH/MDH superfamily. MDH type 2 family. As to quaternary structure, homodimer.

Its subcellular location is the plastid. It is found in the chloroplast. It carries out the reaction (S)-malate + NADP(+) = oxaloacetate + NADPH + H(+). Chloroplast NADP-MDH is activated upon illumination. In order to be enzymatically active, disulfide bridges on the protein must be reduced by thioredoxin which receives electrons from ferredoxin and the electron transport system of photosynthesis. In terms of biological role, the chloroplastic, NADP-dependent form is essential for the photosynthesis C4 cycle, which allows plants to circumvent the problem of photorespiration. In C4 plants, NADP-MDH activity acts to convert oxaloacetate to malate in chloroplasts of mesophyll cells for transport to the bundle sheath cells. This Sorghum bicolor (Sorghum) protein is Malate dehydrogenase [NADP] 1, chloroplastic.